A 217-amino-acid chain; its full sequence is Dihydroflavonol 4-reductase (217 aa).

Lysine 27 and tyrosine 146 together coordinate NADP(+).

This sequence belongs to the NAD(P)-dependent epimerase/dehydratase family. Dihydroflavonol-4-reductase subfamily.

It carries out the reaction a (2R,3S,4S)-leucoanthocyanidin + NADP(+) = a (2R,3R)-dihydroflavonol + NADPH + H(+). It catalyses the reaction (2S)-flavan-4-ol + NADP(+) = (2S)-flavanone + NADPH + H(+). Its pathway is pigment biosynthesis; anthocyanin biosynthesis. Bifunctional enzyme involved in flavonoid metabolism. This chain is Dihydroflavonol 4-reductase (DFR1), found in Medicago sativa (Alfalfa).